The primary structure comprises 191 residues: GDP-mannose pyrophosphatase (191 aa).

GDP-alpha-D-mannose contacts are provided by residues Y17, 38–40 (KRE), R67, and 85–87 (AGL). The 138-residue stretch at 43–180 (DRGNGATILL…EIRDGKTVLL (138 aa)) folds into the Nudix hydrolase domain. Residues A85, E100, and E104 each contribute to the Mg(2+) site. The Nudix box motif lies at 86–106 (GLLDNDEPEVCIRKEAIEETG). GDP-alpha-D-mannose-binding positions include E104, E127, 150-151 (DE), and K176. E151 lines the Mg(2+) pocket.

It belongs to the Nudix hydrolase family. NudK subfamily. As to quaternary structure, homodimer. Mg(2+) serves as cofactor.

The enzyme catalyses GDP-alpha-D-mannose + H2O = alpha-D-mannose 1-phosphate + GMP + 2 H(+). Functionally, nucleoside diphosphate sugar hydrolase that hydrolyzes GDP-mannose as its preferred substrate, yielding GMP and mannose-1-phosphate. The chain is GDP-mannose pyrophosphatase (nudK) from Shigella flexneri serotype 5b (strain 8401).